The following is a 138-amino-acid chain: Acidic phospholipase A2 AplTX-I (138 aa).

The signal sequence occupies residues 1–16 (MRTLWIMAVLLLGVEG). Intrachain disulfides connect Cys42–Cys131, Cys44–Cys60, Cys59–Cys111, Cys65–Cys138, Cys66–Cys104, Cys73–Cys97, and Cys91–Cys102. Ca(2+) is bound by residues Tyr43, Gly45, and Gly47. His63 is a catalytic residue. Position 64 (Asp64) interacts with Ca(2+). Asp105 is an active-site residue.

Monomer. Ca(2+) serves as cofactor. As to expression, expressed by the venom gland.

The protein localises to the secreted. The enzyme catalyses a 1,2-diacyl-sn-glycero-3-phosphocholine + H2O = a 1-acyl-sn-glycero-3-phosphocholine + a fatty acid + H(+). Its activity is regulated as follows. Inhibited by divalent cations different from calcium ions (cadmium, magnesium, manganese, zinc), since they act as competitive antagonists of this cofactor. Functionally, snake venom phospholipase A2 (PLA2) that triggers a high neuromuscular toxicity in chick biventer cervicis preparations, but not in mouse phrenic nerve-diaphragm (PND) preparations, suggesting a selective neurotoxin activity towards birds. Does not induce myotoxic, coagulant, anticoagulant, edema, and antibacterial activities. PLA2 catalyzes the calcium-dependent hydrolysis of the 2-acyl groups in 3-sn-phosphoglycerides. This Agkistrodon piscivorus leucostoma (Western cottonmouth) protein is Acidic phospholipase A2 AplTX-I.